The following is a 426-amino-acid chain: 4-aminobutyrate aminotransferase GabT (426 aa).

Pyridoxal 5'-phosphate is bound by residues 111 to 112 (GS) and Gln242. Position 268 is an N6-(pyridoxal phosphate)lysine (Lys268). A pyridoxal 5'-phosphate-binding site is contributed by Thr297.

This sequence belongs to the class-III pyridoxal-phosphate-dependent aminotransferase family. As to quaternary structure, homotetramer. Pyridoxal 5'-phosphate is required as a cofactor.

It catalyses the reaction 4-aminobutanoate + 2-oxoglutarate = succinate semialdehyde + L-glutamate. It carries out the reaction 5-aminopentanoate + 2-oxoglutarate = 5-oxopentanoate + L-glutamate. It participates in amino-acid degradation; 4-aminobutanoate degradation. Its pathway is amino-acid degradation. Its function is as follows. Pyridoxal phosphate-dependent enzyme that catalyzes transamination between primary amines and alpha-keto acids. Catalyzes the transfer of the amino group from gamma-aminobutyrate (GABA) to alpha-ketoglutarate (KG) to yield succinic semialdehyde (SSA) and glutamate. Thereby functions in a GABA degradation pathway that allows some E.coli strains to utilize GABA as a nitrogen source for growth. Also catalyzes the conversion of 5-aminovalerate to glutarate semialdehyde, as part of a L-lysine degradation pathway that proceeds via cadaverine, glutarate and L-2-hydroxyglutarate. This Escherichia coli (strain K12) protein is 4-aminobutyrate aminotransferase GabT (gabT).